The primary structure comprises 640 residues: MEIENIVANTVYIKARESGGQKKGKSKKWKNYLQFPHYTECIPQKKENGEPYAFVVEKQPIGKLLFHEFCQATNPQYHQCCQFQTKVEEYETSDDDGQSRRDLASAIVALLSSKNDQDLSSSIDEEVWCAFLSDEVISTCISTADSATHDSEPRSDIFSEPYRLTREYLKQKPFAEFIQTMYFHRFLQWKWLEKRPVDKHTFRLYRVLGKGGFGEVCACQVRASGKMYALKKLEKKRVKKRHAETLSLNEKQILQKVNSPFVVSLAYAYETKDALCLVLTLMNGGDLKFHLYNLMPGGFDEKRVQFYAAEITLGLQHLHLEHILYRDLKPENILLDDFGHVRISDLGLAVELKDNEPIKGRVGTVGYMAPEIVKNERYTYGVDWWGVGCLIYEMIEGKAPFRQRKEKVKREEVERRVREDQEKYSEKFSEAARTLCRGLLHKEPGFRLGCRRVGKPEDGAEEIRAHPFFNTADTATGREPVPWKKMEAGKVTPPFCPDPRAVYAKDVLDIEQFSTVKGVRLDATDTQFYGKFNTGCVSIPWQSEMIETECFAELNTFYEEDGSLVWNLRPDGINMEERRNGTSKPGFFSRLFRKKNIEVTKSLHDLSRLGVDQQQPSTSAKPAAVRSSRAASASGRTSMI.

The tract at residues 1–201 (MEIENIVANT…LEKRPVDKHT (201 aa)) is N-terminal. Residues 52 to 187 (YAFVVEKQPI…IQTMYFHRFL (136 aa)) enclose the RGS domain. One can recognise a Protein kinase domain in the interval 202–469 (FRLYRVLGKG…AEEIRAHPFF (268 aa)). ATP-binding positions include 208–216 (LGKGGFGEV) and Lys-231. Asp-327 functions as the Proton acceptor in the catalytic mechanism. Residues 479 to 544 (EPVPWKKMEA…GCVSIPWQSE (66 aa)) form the AGC-kinase C-terminal domain. The segment at 610–640 (GVDQQQPSTSAKPAAVRSSRAASASGRTSMI) is disordered. Over residues 619–640 (SAKPAAVRSSRAASASGRTSMI) the composition is skewed to low complexity.

The protein belongs to the protein kinase superfamily. AGC Ser/Thr protein kinase family. GPRK subfamily.

The enzyme catalyses [G-protein-coupled receptor] + ATP = [G-protein-coupled receptor]-phosphate + ADP + H(+). Specifically phosphorylates the activated forms of G protein-coupled receptors. The chain is G protein-coupled receptor kinase 1 (grk-1) from Caenorhabditis briggsae.